The chain runs to 610 residues: MFQSILFLAFYGRPVFGSAAARDYACVNTAESRDCWKDGFNIETDYYGKEEAPEGKLVEYELTLSQQIISPDGYEMLGMVVNGQYPGPTIEADWGDTLRITVKNNFTENYNGTAVHWHGIRQKETNWLDGVPGVTQCPITPGDSQVYEFRVTQYGTSWYHSHYSLQYSNGAYGPIVIHGPSSANWDVDLGPWLLSDWYHDDAFALDHVGITTNRAAIPKSSLINGKGYYECDPTNDAKCTGTRDYYEVVLKQGTKYKFGIINTSTILTYTFWIDGHNFTIIAIDFVPIEPLTVDTLNVGIGQRYEIIIETNPDFDDDSSFWMHAQYCFINQTDIVDDKVGIVRYESAGSSDPPYINKSDYHLNFGCADPKPESLVPILKQQVGAQANPLAAEDYFRVGLGNFTWPDATNSTGSVFLWFLQKLPLYVNWSEPSVKKLTIDETADFPPNSRPIELDYETGQWVYFVIESDWDPAGAVDQYGQEIRVEPSVHPFHLHGHDFLILAQGLGKFTSDIQPNLDNPPRRDTVDVEPLGYVWIAFQIDNPGAWLFHCHIAFHSSDGIAIQFLEQPSKLKPIMEEAGVLGDFADRCNKWDDWYQAVNIPHNATQADSGV.

A signal peptide spans 1 to 20; sequence MFQSILFLAFYGRPVFGSAA. Plastocyanin-like domains follow at residues 67 to 181 and 191 to 344; these read QIIS…HGPS and PWLL…IVRY. N-linked (GlcNAc...) asparagine glycans are attached at residues Asn-105, Asn-111, Asn-262, Asn-277, Asn-330, Asn-356, Asn-401, Asn-409, Asn-427, and Asn-602. Residues 425–568 form the Plastocyanin-like 3 domain; it reads YVNWSEPSVK…IAIQFLEQPS (144 aa).

Belongs to the multicopper oxidase family.

It functions in the pathway secondary metabolite biosynthesis. In terms of biological role, oxidoreductase; part of the gene cluster that mediates the biosynthesis of pestheic acid, a diphenyl ether which is a biosynthetic precursor of the unique chloropupukeananes. The biosynthesis initiates from condensation of acetate and malonate units catalyzed by the non-reducing PKS ptaA. As the ptaA protein is TE/CLC domain-deficient, hydrolysis and Claisen cyclization of the polyketide could be catalyzed by ptaB containing a beta-lactamase domain. The ptaB protein might hydrolyze the thioester bond between the ACP of ptaA and the intermediate to release atrochrysone carboxylic acid, which is spontaneously dehydrated to form endocrocin anthrone. Endocrocin anthrone is then converted to endocrocin, catalyzed by the anthrone oxygenase ptaC. Spontaneous decarboxylation of endocrocin occurs to generate emodin. An O-methyltransferase (ptaH or ptaI) could methylate emodin to form physcion. PtaJ could then catalyze the oxidative cleavage of physcion, and rotation of the intermediate could then afford desmethylisosulochrin. PtaF, a putative NADH-dependent oxidoreductase, might also participate in the oxidative cleavage step. Desmethylisosulochrin is then transformed by another O-methyltransferase (ptaH or ptaI) to form isosulochrin. Chlorination of isosulochrin by ptaM in the cyclohexadienone B ring then produces chloroisosulochrin. PtaE is responsible for the oxidative coupling reactions of both benzophenones isosulouchrin and chloroisosulochrin to RES-1214-1 and pestheic acid respectively, regardless of chlorination. This is Oxidoreductase ptaE from Pestalotiopsis fici (strain W106-1 / CGMCC3.15140).